The following is a 111-amino-acid chain: MIQVLLVTICLAVFPYQGSSIILESGNVNDYEIVYPKKVTVLPTGAMNSGNPCCDPVTCKPRRGEHCVSGPCCRNCKFLNAGTICNRARGDDMNDYCTGISSDCPRNPYKD.

A signal peptide spans 1 to 20; the sequence is MIQVLLVTICLAVFPYQGSS. A propeptide spanning residues 21–47 is cleaved from the precursor; the sequence is IILESGNVNDYEIVYPKKVTVLPTGAM. In terms of domain architecture, Disintegrin spans 47-111; the sequence is MNSGNPCCDP…SDCPRNPYKD (65 aa). Intrachain disulfides connect cysteine 53/cysteine 76, cysteine 67/cysteine 73, cysteine 72/cysteine 97, and cysteine 85/cysteine 104. Positions 89–91 match the Cell attachment site motif; it reads RGD.

The protein belongs to the disintegrin family. Dimeric disintegrin subfamily. In terms of assembly, heterodimer with subunit beta; disulfide-linked. As to expression, expressed by the venom gland.

Its subcellular location is the secreted. In terms of biological role, strongly inhibits ADP-induced platelet aggregation on human platelet-rich plasma. Also avidly binds to the laminin-binding beta-1 integrins (alpha-3/beta-1, alpha-6/beta-1, and alpha-7/beta-1) in an RGD-independent manner. The protein is Disintegrin lebein-1-alpha of Macrovipera lebetinus (Levantine viper).